The chain runs to 395 residues: Probable sugar efflux transporter (395 aa).

Transmembrane regions (helical) follow at residues 13–33 (VVSL…PVAL), 48–68 (VGLI…PCML), 82–102 (IFIL…YWVL), 107–127 (IGVA…VVRL), 134–154 (AQAL…GLPL), 168–188 (FVLI…LLPV), 207–227 (PALL…FTAY), 244–264 (FTTI…MLFS), 272–292 (AGFL…LLPL), 297–317 (WSLS…SLGM), 331–351 (VAMA…ALLG), and 363–383 (IGYM…FTFV).

This sequence belongs to the major facilitator superfamily. SotB (TC 2.A.1.2) family.

The protein resides in the cell inner membrane. Involved in the efflux of sugars. The physiological role may be the reduction of the intracellular concentration of toxic sugars or sugar metabolites. In Pectobacterium atrosepticum (strain SCRI 1043 / ATCC BAA-672) (Erwinia carotovora subsp. atroseptica), this protein is Probable sugar efflux transporter.